We begin with the raw amino-acid sequence, 207 residues long: Outer-membrane lipoprotein LolB (207 aa).

A signal peptide spans 1–21 (MTLPDFRLIRLLPLASLVLTA). Residue cysteine 22 is the site of N-palmitoyl cysteine attachment. The S-diacylglycerol cysteine moiety is linked to residue cysteine 22.

It belongs to the LolB family. Monomer.

The protein localises to the cell outer membrane. In terms of biological role, plays a critical role in the incorporation of lipoproteins in the outer membrane after they are released by the LolA protein. This Salmonella schwarzengrund (strain CVM19633) protein is Outer-membrane lipoprotein LolB.